Reading from the N-terminus, the 452-residue chain is Probable glycine dehydrogenase (decarboxylating) subunit 1 (452 aa).

It belongs to the GcvP family. N-terminal subunit subfamily. As to quaternary structure, the glycine cleavage system is composed of four proteins: P, T, L and H. In this organism, the P 'protein' is a heterodimer of two subunits.

The enzyme catalyses N(6)-[(R)-lipoyl]-L-lysyl-[glycine-cleavage complex H protein] + glycine + H(+) = N(6)-[(R)-S(8)-aminomethyldihydrolipoyl]-L-lysyl-[glycine-cleavage complex H protein] + CO2. Functionally, the glycine cleavage system catalyzes the degradation of glycine. The P protein binds the alpha-amino group of glycine through its pyridoxal phosphate cofactor; CO(2) is released and the remaining methylamine moiety is then transferred to the lipoamide cofactor of the H protein. The chain is Probable glycine dehydrogenase (decarboxylating) subunit 1 from Alcanivorax borkumensis (strain ATCC 700651 / DSM 11573 / NCIMB 13689 / SK2).